Here is a 135-residue protein sequence, read N- to C-terminus: UPF0306 protein C8J_1355 (135 aa).

Belongs to the UPF0306 family.

The sequence is that of UPF0306 protein C8J_1355 from Campylobacter jejuni subsp. jejuni serotype O:6 (strain 81116 / NCTC 11828).